We begin with the raw amino-acid sequence, 548 residues long: Esterase-5A (548 aa).

An N-terminal signal peptide occupies residues 1–21 (MHLVRWLICLIQLWVQLGAAG). Cysteine 87 and cysteine 106 form a disulfide bridge. Residues asparagine 95 and asparagine 116 are each glycosylated (N-linked (GlcNAc...) asparagine). The active-site Acyl-ester intermediate is serine 210. Cysteine 262 and cysteine 274 are disulfide-bonded. Asparagine 479 carries an N-linked (GlcNAc...) asparagine glycan. The cysteines at positions 518 and 539 are disulfide-linked.

It belongs to the type-B carboxylesterase/lipase family.

Its subcellular location is the secreted. The catalysed reaction is a carboxylic ester + H2O = an alcohol + a carboxylate + H(+). This chain is Esterase-5A (Est-5A), found in Drosophila pseudoobscura pseudoobscura (Fruit fly).